Consider the following 127-residue polypeptide: MSLLKEFKEFAMRGNVMDLAVAVVMGVAFNKIVTALVDGIIMPCVGLLLGGVNIAGLSFTVGDAQIKWGNFLQNVIDFIIVAFAIFILIKLINLLQRKKANEPEPVTPEVQLLTEIRDLLARNSSKI.

The next 3 membrane-spanning stretches (helical) occupy residues 9-29 (EFAM…GVAF), 32-52 (IVTA…LGGV), and 75-95 (VIDF…INLL).

Belongs to the MscL family. Homopentamer.

It localises to the cell inner membrane. Functionally, channel that opens in response to stretch forces in the membrane lipid bilayer. May participate in the regulation of osmotic pressure changes within the cell. The chain is Large-conductance mechanosensitive channel from Legionella pneumophila (strain Lens).